We begin with the raw amino-acid sequence, 275 residues long: Sororin-B (275 aa).

The span at 1–16 (MSERKKRGSSDADSRR) shows a compositional bias: basic and acidic residues. Disordered stretches follow at residues 1-42 (MSER…PAPI) and 63-117 (NTGS…EIDV). Polar residues-rich tracts occupy residues 63-76 (NTGS…SNVT) and 93-112 (NAFS…QSSA). A KEN box motif is present at residues 91-93 (KEN). The FGF motif motif lies at 186–188 (FGF). Residues 253 to 275 (VDEWAAIMNAEFDEAEKFDLTVE) form a C-terminal Sororin domain region.

The protein belongs to the sororin family. In terms of assembly, interacts with the APC/C complex. Interacts with the chromatin-bound cohesin complex; the interaction is indirect, occurs after DNA replication and requires acetylation of the cohesin component smc3. Interacts (via the FGF motif) with pds5a and pds5b; the interaction is direct and prevents the interaction of pds5a with wapl. In terms of processing, ubiquitinated by the APC/C complex in G1, leading to its degradation.

It is found in the nucleus. Its subcellular location is the chromosome. It localises to the cytoplasm. Functionally, regulator of sister chromatid cohesion in mitosis stabilizing cohesin complex association with chromatin. May antagonize the action of wapl which stimulates cohesin dissociation from chromatin. Cohesion ensures that chromosome partitioning is accurate in both meiotic and mitotic cells and plays an important role in DNA repair. Required for efficient DNA double-stranded break repair. The protein is Sororin-B (cdca5-b) of Xenopus laevis (African clawed frog).